The following is a 95-amino-acid chain: Aspartyl/glutamyl-tRNA(Asn/Gln) amidotransferase subunit C (95 aa).

This sequence belongs to the GatC family. Heterotrimer of A, B and C subunits.

The enzyme catalyses L-glutamyl-tRNA(Gln) + L-glutamine + ATP + H2O = L-glutaminyl-tRNA(Gln) + L-glutamate + ADP + phosphate + H(+). The catalysed reaction is L-aspartyl-tRNA(Asn) + L-glutamine + ATP + H2O = L-asparaginyl-tRNA(Asn) + L-glutamate + ADP + phosphate + 2 H(+). Its function is as follows. Allows the formation of correctly charged Asn-tRNA(Asn) or Gln-tRNA(Gln) through the transamidation of misacylated Asp-tRNA(Asn) or Glu-tRNA(Gln) in organisms which lack either or both of asparaginyl-tRNA or glutaminyl-tRNA synthetases. The reaction takes place in the presence of glutamine and ATP through an activated phospho-Asp-tRNA(Asn) or phospho-Glu-tRNA(Gln). The sequence is that of Aspartyl/glutamyl-tRNA(Asn/Gln) amidotransferase subunit C from Rhodospirillum centenum (strain ATCC 51521 / SW).